We begin with the raw amino-acid sequence, 252 residues long: Isoprenyl transferase (252 aa).

Asp-32 is an active-site residue. Asp-32 serves as a coordination point for Mg(2+). Substrate is bound by residues 33-36, Trp-37, Arg-45, His-49, and 77-79; these read GNGR and STE. The Proton acceptor role is filled by Asn-80. Substrate contacts are provided by residues Trp-81, Arg-83, Arg-200, and 206–208; that span reads RLS. Position 219 (Glu-219) interacts with Mg(2+).

It belongs to the UPP synthase family. Homodimer. Mg(2+) serves as cofactor.

In terms of biological role, catalyzes the condensation of isopentenyl diphosphate (IPP) with allylic pyrophosphates generating different type of terpenoids. This chain is Isoprenyl transferase, found in Listeria monocytogenes serotype 4b (strain F2365).